The sequence spans 281 residues: ATP phosphoribosyltransferase (281 aa).

The protein belongs to the ATP phosphoribosyltransferase family. Long subfamily. Mg(2+) is required as a cofactor.

The protein resides in the cytoplasm. It carries out the reaction 1-(5-phospho-beta-D-ribosyl)-ATP + diphosphate = 5-phospho-alpha-D-ribose 1-diphosphate + ATP. It participates in amino-acid biosynthesis; L-histidine biosynthesis; L-histidine from 5-phospho-alpha-D-ribose 1-diphosphate: step 1/9. Its activity is regulated as follows. Feedback inhibited by histidine. Its function is as follows. Catalyzes the condensation of ATP and 5-phosphoribose 1-diphosphate to form N'-(5'-phosphoribosyl)-ATP (PR-ATP). Has a crucial role in the pathway because the rate of histidine biosynthesis seems to be controlled primarily by regulation of HisG enzymatic activity. The chain is ATP phosphoribosyltransferase from Corynebacterium jeikeium (strain K411).